Here is a 95-residue protein sequence, read N- to C-terminus: Aspartyl/glutamyl-tRNA(Asn/Gln) amidotransferase subunit C (95 aa).

Belongs to the GatC family. Heterotrimer of A, B and C subunits.

It carries out the reaction L-glutamyl-tRNA(Gln) + L-glutamine + ATP + H2O = L-glutaminyl-tRNA(Gln) + L-glutamate + ADP + phosphate + H(+). The enzyme catalyses L-aspartyl-tRNA(Asn) + L-glutamine + ATP + H2O = L-asparaginyl-tRNA(Asn) + L-glutamate + ADP + phosphate + 2 H(+). Functionally, allows the formation of correctly charged Asn-tRNA(Asn) or Gln-tRNA(Gln) through the transamidation of misacylated Asp-tRNA(Asn) or Glu-tRNA(Gln) in organisms which lack either or both of asparaginyl-tRNA or glutaminyl-tRNA synthetases. The reaction takes place in the presence of glutamine and ATP through an activated phospho-Asp-tRNA(Asn) or phospho-Glu-tRNA(Gln). The chain is Aspartyl/glutamyl-tRNA(Asn/Gln) amidotransferase subunit C from Anaeromyxobacter sp. (strain Fw109-5).